The sequence spans 68 residues: Conotoxin Cal12.1p1 (68 aa).

Residues Asp1–Thr23 constitute a propeptide that is removed on maturation.

Post-translationally, contains 4 disulfide bonds. As to expression, expressed by the venom duct.

It is found in the secreted. The protein is Conotoxin Cal12.1p1 of Californiconus californicus (California cone).